The sequence spans 171 residues: MDRAQKQEAIEALKGVFADSGAVVVTHYLGLTVAEMTDLRGKLREQGAQLKVVKNTLAQKALDGSVGEAGDALFKGPVAIAFAPDPVSAAKVATQYAKDNDKFTVVGGLMGQQVLDQKGVSALATLPSLDQLRGKIIGLLQAPATKVAGVLQAPAGQLARVMGAYAAKDAA.

Belongs to the universal ribosomal protein uL10 family. As to quaternary structure, part of the ribosomal stalk of the 50S ribosomal subunit. The N-terminus interacts with L11 and the large rRNA to form the base of the stalk. The C-terminus forms an elongated spine to which L12 dimers bind in a sequential fashion forming a multimeric L10(L12)X complex.

In terms of biological role, forms part of the ribosomal stalk, playing a central role in the interaction of the ribosome with GTP-bound translation factors. In Phenylobacterium zucineum (strain HLK1), this protein is Large ribosomal subunit protein uL10.